The sequence spans 322 residues: 5'-AMP-activated protein kinase subunit gamma (322 aa).

4 CBS domains span residues 37-97 (VSYR…NPDK), 118-181 (VDQL…CRET), 194-253 (ITQD…YNDL), and 262-322 (MRRS…LGSN). Residues Ile-42, Arg-146, 166–169 (TQYR), and Thr-195 contribute to the ADP site. AMP is bound by residues Thr-195, Lys-200, and 221-222 (SS). ATP is bound by residues Thr-195, Lys-200, and 221-222 (SS). Residues 221-222 (SS), 291-293 (RVH), and 309-312 (TLSD) contribute to the ADP site. An AMP-binding site is contributed by 309–312 (TLSD). Residue 309–312 (TLSD) participates in ATP binding.

It belongs to the 5'-AMP-activated protein kinase gamma subunit family. As to quaternary structure, AMPK is a heterotrimer of an alpha catalytic subunit (SNF1), a beta (SIP1, SIP2 or GAL83) and a gamma non-catalytic subunits (SNF4). Note=Interaction between SNF1 and SNF4 is inhibited by high levels of glucose.

Its subcellular location is the nucleus. It is found in the cytoplasm. Functionally, adenine nucleotides-binding subunit gamma of AMP-activated protein kinase (AMPK), an energy sensor protein kinase that plays a key role in regulating cellular energy metabolism. In response to reduction of intracellular ATP levels, AMPK activates energy-producing pathways and inhibits energy-consuming processes: inhibits protein, carbohydrate and lipid biosynthesis, as well as cell growth and proliferation. AMPK acts via direct phosphorylation of metabolic enzymes, and by longer-term effects via phosphorylation of transcription regulators. Gamma non-catalytic subunit mediates binding to AMP, ADP and ATP, leading to activate or inhibit AMPK: AMP-binding results in allosteric activation of alpha catalytic subunit (SNF1) both by inducing phosphorylation and preventing dephosphorylation of catalytic subunits. This chain is 5'-AMP-activated protein kinase subunit gamma (SNF4), found in Saccharomyces cerevisiae (strain ATCC 204508 / S288c) (Baker's yeast).